The following is a 208-amino-acid chain: Large ribosomal subunit protein uL3 (208 aa).

The disordered stretch occupies residues 124–146 (HGQSRGPMAHGSRYHRRPGSMGP).

It belongs to the universal ribosomal protein uL3 family. As to quaternary structure, part of the 50S ribosomal subunit. Forms a cluster with proteins L14 and L19.

Its function is as follows. One of the primary rRNA binding proteins, it binds directly near the 3'-end of the 23S rRNA, where it nucleates assembly of the 50S subunit. This Streptococcus thermophilus (strain ATCC BAA-491 / LMD-9) protein is Large ribosomal subunit protein uL3.